The chain runs to 570 residues: Phosphoribosylaminoimidazole carboxylase (570 aa).

The ATP-grasp domain maps to K110 to L297. G137–S192 serves as a coordination point for ATP.

In the C-terminal section; belongs to the AIR carboxylase family. Class I subfamily.

It carries out the reaction 5-amino-1-(5-phospho-D-ribosyl)imidazole-4-carboxylate + H(+) = 5-amino-1-(5-phospho-beta-D-ribosyl)imidazole + CO2. It participates in purine metabolism; IMP biosynthesis via de novo pathway; 5-amino-1-(5-phospho-D-ribosyl)imidazole-4-carboxylate from 5-amino-1-(5-phospho-D-ribosyl)imidazole (carboxylase route): step 1/1. This Candida glabrata (strain ATCC 2001 / BCRC 20586 / JCM 3761 / NBRC 0622 / NRRL Y-65 / CBS 138) (Yeast) protein is Phosphoribosylaminoimidazole carboxylase (ADE2).